Reading from the N-terminus, the 1120-residue chain is Vacuolar cation-chloride cotransporter 1 (1120 aa).

The tract at residues 1–21 (MVSRFYQIPGTHRPSSAISSS) is disordered. At 1-62 (MVSRFYQIPG…YDPDNPNKDK (62 aa)) the chain is on the cytoplasmic side. Serine 34 carries the phosphoserine modification. A helical transmembrane segment spans residues 63–83 (LGTYDGVFVPTALNVLSILMF). Residues 84–85 (LR) are Vacuolar-facing. The helical transmembrane segment at 86–106 (FGFILGQLGIICTIGLLLLSY) threads the bilayer. At 107 to 145 (TINLLTTLSISAISTNGTVRGGGAYYMISRSLGPEFGGS) the chain is on the cytoplasmic side. Residues 146 to 166 (IGLVFFLGQVFNAGMNAVGII) form a helical membrane-spanning segment. Residues 167–193 (EPLLYNLGYSAQGEPPAALGELLPRGH) lie on the Vacuolar side of the membrane. Residues 194–214 (WHEFTYATVILFLCFSVAFVG) traverse the membrane as a helical segment. Topologically, residues 215 to 221 (SQTVSRA) are cytoplasmic. The helical transmembrane segment at 222 to 242 (GNILFLVLAASIFSIPLSALI) threads the bilayer. Topologically, residues 243–283 (RSPFTEGGISYTGPSWQTFHDNLLPHLTKGAAGSLLKGKET) are vacuolar. Residues 284-304 (FNDLFGVFFPATAGIFAGAGM) traverse the membrane as a helical segment. The Cytoplasmic portion of the chain corresponds to 305–317 (SSELRKPSKSIPK). The helical transmembrane segment at 318-338 (GTLWGLLFTFICYAVVVFSMG) threads the bilayer. Residues 339–360 (CSIPRRSLYDEVQIIQTISSVQ) lie on the Vacuolar side of the membrane. Residues 361 to 381 (WVIFMGEMATSLFSIIVGMLG) traverse the membrane as a helical segment. Over 382 to 393 (AAYVLEAIAKDN) the chain is Cytoplasmic. Residues 394-414 (IIPGLEIFAHSPLYSLIFTWI) form a helical membrane-spanning segment. Residues 415 to 430 (LTQLCLFSDVNKIATF) are Vacuolar-facing. Residues 431-451 (ITMTFLMTFVVMNLACFLLGI) traverse the membrane as a helical segment. At 452 to 462 (SSAPNFRPSFK) the chain is on the cytoplasmic side. Residues 463–482 (YFNRYTTAIGALLSVVAMLI) form a helical membrane-spanning segment. The Vacuolar portion of the chain corresponds to 483–487 (VDGIS). The helical transmembrane segment at 488–506 (ASVLFLAMILLFLFIHYFS) threads the bilayer. Residues 507 to 1120 (PPKSWGDVSQ…SQTMTVTTAL (614 aa)) lie on the Cytoplasmic side of the membrane. 3 positions are modified to phosphoserine: serine 654, serine 915, and serine 918.

This sequence belongs to the SLC12A transporter family.

The protein resides in the vacuole membrane. Functionally, catalyzes the coordinated symport of chloride with potassium ions across the vacuolar membrane. Involved in vacuolar osmoregulation. The polypeptide is Vacuolar cation-chloride cotransporter 1 (Saccharomyces cerevisiae (strain ATCC 204508 / S288c) (Baker's yeast)).